The chain runs to 847 residues: Glycogen phosphorylase, liver form (847 aa).

Residue Ala-2 is modified to N-acetylalanine. Position 15 is a phosphoserine; by PHK; in form phosphorylase a (Ser-15). AMP contacts are provided by residues 43–45 (DRN), Tyr-76, and Arg-310. Residue Lys-364 is modified to N6-succinyllysine. Lys-470 carries the N6-acetyllysine modification. Residues Ser-524, Ser-561, and Ser-639 each carry the phosphoserine modification. Lys-681 bears the N6-(pyridoxal phosphate)lysine mark. Lys-796 carries the post-translational modification N6-acetyllysine.

This sequence belongs to the glycogen phosphorylase family. In terms of assembly, homodimer; enzymatically active. Interacts with PPP1R3B; recruits the phosphatase PP1 which dephosphorylates and inactivates PYGL/glycogen phosphorylase. Pyridoxal 5'-phosphate serves as cofactor. In terms of processing, acetylation, which is up-regulated by glucose and insulin and down-regulated by glucagon, inhibits the glycogen phosphorylase activity by promoting PPP1R3B-mediated recruitment of phosphatase PP1 and Ser-15 dephosphorylation. Post-translationally, phosphorylation at Ser-15 converts inactive phosphorylase b into active phosphorylase a. Dephosphorylation of Ser-15 by phosphatase PP1 inactivates the enzyme.

Its subcellular location is the cytoplasm. It is found in the cytosol. The enzyme catalyses [(1-&gt;4)-alpha-D-glucosyl](n) + phosphate = [(1-&gt;4)-alpha-D-glucosyl](n-1) + alpha-D-glucose 1-phosphate. With respect to regulation, allosterically regulated through the non-covalent binding of metabolites, being activated by AMP and inhibited by ATP, ADP, and glucose-6-phosphate. The activity is also controlled by post-translational modifications including phosphorylation and acetylation. Its function is as follows. Allosteric enzyme that catalyzes the rate-limiting step in glycogen catabolism, the phosphorolytic cleavage of glycogen to produce glucose-1-phosphate, and plays a central role in maintaining cellular and organismal glucose homeostasis. This chain is Glycogen phosphorylase, liver form, found in Homo sapiens (Human).